We begin with the raw amino-acid sequence, 263 residues long: Ribosomal RNA small subunit methyltransferase A (263 aa).

Residues histidine 13, leucine 15, glycine 40, glutamate 61, aspartate 86, and asparagine 105 each coordinate S-adenosyl-L-methionine.

The protein belongs to the class I-like SAM-binding methyltransferase superfamily. rRNA adenine N(6)-methyltransferase family. RsmA subfamily.

Its subcellular location is the cytoplasm. The enzyme catalyses adenosine(1518)/adenosine(1519) in 16S rRNA + 4 S-adenosyl-L-methionine = N(6)-dimethyladenosine(1518)/N(6)-dimethyladenosine(1519) in 16S rRNA + 4 S-adenosyl-L-homocysteine + 4 H(+). Its function is as follows. Specifically dimethylates two adjacent adenosines (A1518 and A1519) in the loop of a conserved hairpin near the 3'-end of 16S rRNA in the 30S particle. May play a critical role in biogenesis of 30S subunits. This chain is Ribosomal RNA small subunit methyltransferase A, found in Dichelobacter nodosus (strain VCS1703A).